Consider the following 185-residue polypeptide: Elongation factor P (185 aa).

Belongs to the elongation factor P family.

It localises to the cytoplasm. The protein operates within protein biosynthesis; polypeptide chain elongation. Involved in peptide bond synthesis. Stimulates efficient translation and peptide-bond synthesis on native or reconstituted 70S ribosomes in vitro. Probably functions indirectly by altering the affinity of the ribosome for aminoacyl-tRNA, thus increasing their reactivity as acceptors for peptidyl transferase. The chain is Elongation factor P from Caldanaerobacter subterraneus subsp. tengcongensis (strain DSM 15242 / JCM 11007 / NBRC 100824 / MB4) (Thermoanaerobacter tengcongensis).